A 128-amino-acid chain; its full sequence is Iron-sulfur cluster insertion protein ErpA (128 aa).

Positions 56, 120, and 122 each coordinate iron-sulfur cluster.

The protein belongs to the HesB/IscA family. As to quaternary structure, homodimer. Requires iron-sulfur cluster as cofactor.

In terms of biological role, required for insertion of 4Fe-4S clusters for at least IspG. This Xanthomonas oryzae pv. oryzae (strain MAFF 311018) protein is Iron-sulfur cluster insertion protein ErpA.